Here is a 523-residue protein sequence, read N- to C-terminus: Transcription initiation factor TFIID subunit 4 (523 aa).

2 disordered regions span residues 1–100 and 185–241; these read MSLP…AASD and ASVE…VQGG. Low complexity predominate over residues 58-77; the sequence is QMQPPRQPIQQQMQHFQSPS. Pro residues predominate over residues 78–87; the sequence is PMAPQGPPGT. One can recognise a TAFH domain in the interval 101-199; sequence DKNVTKCVRF…VNPPPGYVFN (99 aa). Positions 204–213 are enriched in pro residues; it reads PGPPQPPPPQ. The span at 214–236 shows a compositional bias: low complexity; that stretch reads QQSQQQPPLEMRQIPNPNQIPPQ. The tract at residues 329–383 is histone-fold; the sequence is LKPDEVLNRITKRMMSSCSVEEEALVAISDAVESHLRELITLMAGVAEHRVESLR. Residues 333 to 382 form a necessary and sufficient for interaction with oma-1 region; that stretch reads EVLNRITKRMMSSCSVEEEALVAISDAVESHLRELITLMAGVAEHRVESL. Residues 407-435 form a disordered region; sequence QEEELRESREKESLIRMSKNKNSGKETIE.

It belongs to the TAF4 family. Component of the TFIID basal transcription factor complex, composed of TATA-box-binding protein tbp-1, and a number of TBP-associated factors (TAFs). Interacts (via histone-fold domain) with oma-1 (via histone-fold domain). May also interact with oma-2. Interacts (via histone-fold domain) with taf-12 (via the histone-fold domain).

It is found in the nucleus. Its subcellular location is the cytoplasm. The TFIID basal transcription factor complex plays a major role in the initiation of RNA polymerase II (Pol II)-dependent transcription. TFIID recognizes and binds promoters via its subunit tbp-1, a TATA-box-binding protein, and promotes assembly of the pre-initiation complex (PIC). The TFIID complex consists of tbp-1 and TBP-associated factors (TAFs), including taf-4. Essential for early embryonic development, probably acting via activating transcription initiation by RNA polymerase II, as part of the TFIID complex. In early embryos, but not oocytes, remains, presumably inactive, in the cytoplasm as a result of binding to oma-1. Upon degradation of oma-1, taf-4 is released and bound by taf-12, and the taf-4/12 heterodimer translocates to the nucleus and transcriptional repression is relieved. Involved in lifespan extension in a manner dependent upon mitochondrial function. Plays a role in modulating polyribosome formation. In Caenorhabditis elegans, this protein is Transcription initiation factor TFIID subunit 4.